Here is a 196-residue protein sequence, read N- to C-terminus: HTH-type transcriptional regulator BetI (196 aa).

The 61-residue stretch at 8–68 (EVRRAQLIDA…ATMRHILRDL (61 aa)) folds into the HTH tetR-type domain. The segment at residues 31-50 (TLASVAQRANISTGIVSHYF) is a DNA-binding region (H-T-H motif).

It participates in amine and polyamine biosynthesis; betaine biosynthesis via choline pathway [regulation]. In terms of biological role, repressor involved in the biosynthesis of the osmoprotectant glycine betaine. It represses transcription of the choline transporter BetT and the genes of BetAB involved in the synthesis of glycine betaine. The protein is HTH-type transcriptional regulator BetI of Paraburkholderia phymatum (strain DSM 17167 / CIP 108236 / LMG 21445 / STM815) (Burkholderia phymatum).